A 68-amino-acid chain; its full sequence is Large ribosomal subunit protein uL29 (68 aa).

This sequence belongs to the universal ribosomal protein uL29 family.

In Rhodospirillum rubrum (strain ATCC 11170 / ATH 1.1.1 / DSM 467 / LMG 4362 / NCIMB 8255 / S1), this protein is Large ribosomal subunit protein uL29.